A 619-amino-acid chain; its full sequence is Probable Xaa-Pro aminopeptidase P (619 aa).

The Mn(2+) site is built by D416, D427, E525, and E539.

It belongs to the peptidase M24B family. Requires Mn(2+) as cofactor.

The enzyme catalyses Release of any N-terminal amino acid, including proline, that is linked to proline, even from a dipeptide or tripeptide.. In terms of biological role, catalyzes the removal of a penultimate prolyl residue from the N-termini of peptides. The chain is Probable Xaa-Pro aminopeptidase P (AMPP) from Tuber melanosporum (strain Mel28) (Perigord black truffle).